A 190-amino-acid chain; its full sequence is Negative regulator YfiR (190 aa).

Position 60 (Arg60) interacts with GMP. Cystine bridges form between Cys71–Cys110 and Cys145–Cys152. Residues Arg175 and His177 each coordinate GMP.

In terms of assembly, homodimer. Interacts with TpbB/YfiN. Interacts with YfiB. The YfiB-YfiR complex is a 2:2 heterotetramer. Cys-71 and Cys-110 form a disulfide bond in the oxidized form but maintain their free form in the non-oxidized YfiR structure. The Cys-145-Cys-152 disulfide bond is well formed in both structures. The Cys145-Cys152 disulfide bond, but not Cys-71-Cys-110, plays an important role in maintaining the correct folding of the protein.

Its subcellular location is the periplasm. Its activity is regulated as follows. TpbB/YfiN repression is released through an YfiB-dependent sequestration of YfiR to the outer membrane. Binds vitamin B6 (VB6) or L-Trp at the periphery of the dimer, and both VB6 and L-Trp are able to reduce biofilm formation induced by YfiB L43P mutant. However, VB6 or L-Trp alone may have little effects in interrupting the YfiB-YfiR interaction. GMP enhances the binding affinity between YfiB and YfiR. Its function is as follows. Negatively regulates the activity of the diguanylate cyclase TpbB/YfiN, leading to decreased c-di-GMP production. Inhibits TpbB/YfiN allosterically, through a hydrophobic interaction between the C-terminus of YfiR and a conserved region of the periplasmic PAS domain of TpbB/YfiN. Under reducing conditions, may also act as an YfiB-independent sensing device that is able to activate TpbB/YfiN in response to the redox status of the periplasm. In terms of biological role, part of the YfiB-TpbB-YfiR (or yfiBNR) system, encoding a tripartite signaling module that modulates intracellular c-di-GMP levels. The system is a key regulator of the small colony variant (SCV) phenotype, and plays an important role in biofilm formation and in vivo persistence. The c-di-GMP produced by TpbB/YfiN stimulates the production of the Pel and Psl exopolysaccharides, which promotes surface attachment, generates an SCV phenotype and confers resistance against phagocytosis. The sequence is that of Negative regulator YfiR from Pseudomonas aeruginosa (strain ATCC 15692 / DSM 22644 / CIP 104116 / JCM 14847 / LMG 12228 / 1C / PRS 101 / PAO1).